The sequence spans 319 residues: Cell division protein PomZ (319 aa).

61–68 (KGGTGKTS) serves as a coordination point for ATP.

This sequence belongs to the ParA family. Interacts with FtsZ in pull-down experiments.

The protein resides in the cytoplasm. Its function is as follows. Spatial regulator of cell division that is involved in identifying the incipient division site, recruiting FtsZ to the division site and stabilizing the Z-ring. Binds ATP and GTP. The protein is Cell division protein PomZ of Myxococcus xanthus (strain DK1622).